We begin with the raw amino-acid sequence, 383 residues long: Putative gustatory receptor 22c (383 aa).

Residues 1 to 11 lie on the Cytoplasmic side of the membrane; sequence MFASRSDLQSR. The helical transmembrane segment at 12 to 32 threads the bilayer; it reads LCWIILKATLYSSWFLGVFPY. Over 33–45 the chain is Extracellular; the sequence is RFDSRNGQLKRSR. A helical transmembrane segment spans residues 46 to 66; the sequence is FLLFYGLILNFFLLLKMVCSG. The Cytoplasmic portion of the chain corresponds to 67–86; it reads GQKLGIPEAFARNSVLENTH. Residues 87 to 107 traverse the membrane as a helical segment; that stretch reads YTTGMLAVFSCVVIHFLNFWG. Over 108-144 the chain is Extracellular; it reads STRVQDLANELLVLEYQQFASLNETKCPKFNSFVIQK. A glycan (N-linked (GlcNAc...) asparagine) is linked at Asn-130. A helical membrane pass occupies residues 145-165; the sequence is WLSVIGLLLSYLSIAYGLPGN. Topologically, residues 166-250 are cytoplasmic; that stretch reads NFSVEMVLIN…YMVATYEYHM (85 aa). Residues 251 to 271 form a helical membrane-spanning segment; it reads TLVLTTGLASNFLAIYSWIVL. The Extracellular segment spans residues 272 to 279; it reads DISMNINF. A helical membrane pass occupies residues 280–300; sequence IYLLIFPLFLLVNVWNLWLSI. Residues 301–360 lie on the Cytoplasmic side of the membrane; it reads AASDLAENAGKSTQTVLKLFADLEVKDIELERSVNEFALLCGHCQFNFHVCGLFTINYKM. Residues 361 to 381 traverse the membrane as a helical segment; it reads GFQMIITSFLYLIYMIQFDFM. At 382–383 the chain is on the extracellular side; it reads NL.

Belongs to the insect chemoreceptor superfamily. Gustatory receptor (GR) family. Gr22e subfamily. As to expression, taste bristles in the foreleg and labial palps.

The protein localises to the cell membrane. In terms of biological role, probable gustatory receptor which mediates acceptance or avoidance behavior, depending on its substrates. This chain is Putative gustatory receptor 22c (Gr22c), found in Drosophila melanogaster (Fruit fly).